Here is a 294-residue protein sequence, read N- to C-terminus: NAD kinase (294 aa).

The active-site Proton acceptor is the D74. Residues 74–75, K79, 149–150, D179, 190–195, and A214 contribute to the NAD(+) site; these read DG, NE, and TGYSLS.

The protein belongs to the NAD kinase family. A divalent metal cation is required as a cofactor.

The protein localises to the cytoplasm. The enzyme catalyses NAD(+) + ATP = ADP + NADP(+) + H(+). Involved in the regulation of the intracellular balance of NAD and NADP, and is a key enzyme in the biosynthesis of NADP. Catalyzes specifically the phosphorylation on 2'-hydroxyl of the adenosine moiety of NAD to yield NADP. The protein is NAD kinase of Christiangramia forsetii (strain DSM 17595 / CGMCC 1.15422 / KT0803) (Gramella forsetii).